The following is a 515-amino-acid chain: MSLTIPSPIAATTPSAASMTAGEPKTYQVRTFGCQMNVHDSERMAGLLEEAGYVPADGEVADVVVFNTCAVRENADNKLYGNLGQLRQVKEANPGMQIAVGGCLAQKDRETIVKKAPWVDAVFGTHNVGALPALLNRARHNNEAQLEILESLDVFPSTLPTKRDSVYAGWVSISVGCNNTCTFCIVPSLRGKEKDRRPGEILAEIQALVDDGAVEVTLLGQNVNSYGVEFGDRQAFSKLLRACGEIEGLERVRFTSPHPAAFTDDVIDAMAETHNAMPQLHMPLQSGSDKVLKDMRRSYRSSKFLGILDKVRDRIPHAAITTDIIVGFPGETEEDFQATLDVVEKSRFASAFTFQYSKRPGTPAADLPEQLPKAVVQERYERLTALQDRIAAEENAKQLGRKVEVLVTAQSGRKAGETHRLSGRSKDQRLVHFSVPAGAEAPRPGDFVTVTITEAAAFHLVADPAGADDYLLRRSRAGDAWDRSQADSCGVPAAGAASGKAGVSLGMPSLPTRRA.

The MTTase N-terminal domain maps to 25–140 (KTYQVRTFGC…LPALLNRARH (116 aa)). Residues cysteine 34, cysteine 69, cysteine 103, cysteine 177, cysteine 181, and cysteine 184 each contribute to the [4Fe-4S] cluster site. One can recognise a Radical SAM core domain in the interval 163–393 (RDSVYAGWVS…TALQDRIAAE (231 aa)). The region spanning 396–466 (AKQLGRKVEV…AFHLVADPAG (71 aa)) is the TRAM domain. The segment at 482–515 (DRSQADSCGVPAAGAASGKAGVSLGMPSLPTRRA) is disordered. Positions 490–506 (GVPAAGAASGKAGVSLG) are enriched in low complexity.

Belongs to the methylthiotransferase family. MiaB subfamily. In terms of assembly, monomer. Requires [4Fe-4S] cluster as cofactor.

The protein resides in the cytoplasm. The enzyme catalyses N(6)-dimethylallyladenosine(37) in tRNA + (sulfur carrier)-SH + AH2 + 2 S-adenosyl-L-methionine = 2-methylsulfanyl-N(6)-dimethylallyladenosine(37) in tRNA + (sulfur carrier)-H + 5'-deoxyadenosine + L-methionine + A + S-adenosyl-L-homocysteine + 2 H(+). Catalyzes the methylthiolation of N6-(dimethylallyl)adenosine (i(6)A), leading to the formation of 2-methylthio-N6-(dimethylallyl)adenosine (ms(2)i(6)A) at position 37 in tRNAs that read codons beginning with uridine. This Paenarthrobacter aurescens (strain TC1) protein is tRNA-2-methylthio-N(6)-dimethylallyladenosine synthase.